Reading from the N-terminus, the 529-residue chain is Nuclear distribution protein PAC1 (529 aa).

A coiled-coil region spans residues 68–89 (RLQHKIIDLEGEVSNLRTVIDS). WD repeat units lie at residues 120–159 (QSHQLVQSVSIHPALPIILGGCSDGSLIIWNLVNDESLIP), 165–218 (AHIR…HIRT), 221–261 (GHEH…CIKT), 264–318 (GHSD…GLSL), 321–395 (GHTH…FRPH), 416–455 (GHQSWVKSLHIHPNGRFVFSGSDDKTIKIWDLSSLNVNGR), and 496–529 (TEEDRRNELMKSIESKIRCLFISGGVDNCIRLWS).

This sequence belongs to the WD repeat LIS1/nudF family. As to quaternary structure, self-associates. Interacts with NDL1 and dynein.

The protein resides in the cytoplasm. It is found in the cytoskeleton. The protein localises to the spindle pole. In terms of biological role, positively regulates the activity of the minus-end directed microtubule motor protein dynein. Plays a central role in positioning the mitotic spindle at the bud neck during cell division. Targets cytoplasmic dynein to microtubule plus ends, thereby promoting dynein-mediated microtubule sliding along the bud cortex and consequently the movement of the mitotic spindle to the bud neck. In Debaryomyces hansenii (strain ATCC 36239 / CBS 767 / BCRC 21394 / JCM 1990 / NBRC 0083 / IGC 2968) (Yeast), this protein is Nuclear distribution protein PAC1.